An 83-amino-acid chain; its full sequence is Hainantoxin-III 9 (83 aa).

Positions 1–21 (MKASMFLALAGLALLFVVCYA) are cleaved as a signal peptide. Positions 22–48 (SESEEKEFPIELLSKIFAVDVFKGEER) are excised as a propeptide. Cystine bridges form between C50/C65, C57/C70, and C64/C77. L81 is subject to Leucine amide.

Belongs to the neurotoxin 10 (Hwtx-1) family. 15 (Hntx-3) subfamily. In terms of assembly, monomer. In terms of tissue distribution, expressed by the venom gland.

It is found in the secreted. Selective antagonist of neuronal tetrodotoxin (TTX)-sensitive voltage-gated sodium channels (IC(50)=1270 nM on Nav1.1/SCN1A, 270 nM on Nav1.2/SCN2A, 491 nM on Nav1.3/SCN3A and 232 nM on Nav1.7/SCN9A). This toxin suppress Nav1.7 current amplitude without significantly altering the activation, inactivation, and repriming kinetics. Short extreme depolarizations partially activate the toxin-bound channel, indicating voltage-dependent inhibition of this toxin. This toxin increases the deactivation of the Nav1.7 current after extreme depolarizations. The toxin-Nav1.7 complex is gradually dissociated upon prolonged strong depolarizations in a voltage-dependent manner, and the unbound toxin rebinds to Nav1.7 after a long repolarization. Moreover, analysis of chimeric channels showed that the DIIS3-S4 linker is critical for toxin binding to Nav1.7. These data are consistent with this toxin interacting with Nav1.7 site 4 and trapping the domain II voltage sensor in the closed state. This Cyriopagopus hainanus (Chinese bird spider) protein is Hainantoxin-III 9.